The following is a 349-amino-acid chain: Anthranilate phosphoribosyltransferase (349 aa).

5-phospho-alpha-D-ribose 1-diphosphate-binding positions include Gly-82, 85-86 (GD), 92-95 (NVSS), 110-118 (KHGNRAVSG), and Ser-122. Gly-82 is an anthranilate binding site. A Mg(2+)-binding site is contributed by Ser-94. Asn-113 serves as a coordination point for anthranilate. Arg-168 lines the anthranilate pocket. Residues Asp-227 and Glu-228 each coordinate Mg(2+).

Belongs to the anthranilate phosphoribosyltransferase family. As to quaternary structure, homodimer. Mg(2+) is required as a cofactor.

It carries out the reaction N-(5-phospho-beta-D-ribosyl)anthranilate + diphosphate = 5-phospho-alpha-D-ribose 1-diphosphate + anthranilate. The protein operates within amino-acid biosynthesis; L-tryptophan biosynthesis; L-tryptophan from chorismate: step 2/5. Catalyzes the transfer of the phosphoribosyl group of 5-phosphorylribose-1-pyrophosphate (PRPP) to anthranilate to yield N-(5'-phosphoribosyl)-anthranilate (PRA). The protein is Anthranilate phosphoribosyltransferase of Pseudomonas paraeruginosa (strain DSM 24068 / PA7) (Pseudomonas aeruginosa (strain PA7)).